A 1218-amino-acid chain; its full sequence is Structural maintenance of chromosomes protein 2 (1218 aa).

ATP is bound at residue 32–39 (GLNGSGKS). Residues 209-517 (VKLKKEKEEY…INSVKIDYKI (309 aa)) adopt a coiled-coil conformation. One can recognise an SMC hinge domain in the interval 525–654 (DVLGQIYKLI…CSNVDLCKKI (130 aa)). 2 coiled-coil regions span residues 693-949 (LNYE…DTVK) and 978-1045 (RHDV…KKSE).

Belongs to the SMC family. SMC2 subfamily.

The protein resides in the nucleus. May play a role in the conversion of interphase chromatin into condensed chromosomes. The chain is Structural maintenance of chromosomes protein 2 from Plasmodium falciparum (isolate 3D7).